Reading from the N-terminus, the 118-residue chain is Late cornified envelope protein 1B (118 aa).

A disordered region spans residues 87 to 118 (CHRPQSSGCCSQPSGGSSCCGGGSGQHSGGCC). Low complexity predominate over residues 90–103 (PQSSGCCSQPSGGS). Over residues 104–118 (SCCGGGSGQHSGGCC) the composition is skewed to gly residues.

This sequence belongs to the LCE family. As to quaternary structure, interacts with CYSRT1; the interaction is direct. As to expression, skin-specific. Expression was readily detected in adult trunk skin, adult arm skin, fetal skin, penal skin, vulva, esophagus and tongue. Not expressed in the cervix, rectum, lung, colon, or placenta.

Precursors of the cornified envelope of the stratum corneum. The protein is Late cornified envelope protein 1B (LCE1B) of Homo sapiens (Human).